We begin with the raw amino-acid sequence, 201 residues long: ADP-ribosylation factor-like protein 4D (201 aa).

The N-myristoyl glycine moiety is linked to residue glycine 2. GTP is bound by residues 28-35 (GLDSAGKT), 76-80 (DVGGQ), and 135-138 (NKQD).

This sequence belongs to the small GTPase superfamily. Arf family. In terms of assembly, interacts with CYTH2; the interaction is direct and ARL4D GTP-dependent. Does not interact with ARL4D.

The protein localises to the nucleus. It localises to the nucleolus. The protein resides in the cell membrane. It is found in the cytoplasm. Small GTP-binding protein which cycles between an inactive GDP-bound and an active GTP-bound form, and the rate of cycling is regulated by guanine nucleotide exchange factors (GEF) and GTPase-activating proteins (GAP). GTP-binding protein that does not act as an allosteric activator of the cholera toxin catalytic subunit. Recruits CYTH1, CYTH2, CYTH3 and CYTH4 to the plasma membrane in GDP-bound form. The polypeptide is ADP-ribosylation factor-like protein 4D (Arl4d) (Mus musculus (Mouse)).